The primary structure comprises 123 residues: Small ribosomal subunit protein uS12 (123 aa).

A disordered region spans residues methionine 1–leucine 24. Over residues lysine 10–lysine 20 the composition is skewed to basic residues. At aspartate 89 the chain carries 3-methylthioaspartic acid.

It belongs to the universal ribosomal protein uS12 family. As to quaternary structure, part of the 30S ribosomal subunit. Contacts proteins S8 and S17. May interact with IF1 in the 30S initiation complex.

With S4 and S5 plays an important role in translational accuracy. Functionally, interacts with and stabilizes bases of the 16S rRNA that are involved in tRNA selection in the A site and with the mRNA backbone. Located at the interface of the 30S and 50S subunits, it traverses the body of the 30S subunit contacting proteins on the other side and probably holding the rRNA structure together. The combined cluster of proteins S8, S12 and S17 appears to hold together the shoulder and platform of the 30S subunit. This is Small ribosomal subunit protein uS12 from Sulfurovum sp. (strain NBC37-1).